A 222-amino-acid chain; its full sequence is 2-C-methyl-D-erythritol 4-phosphate cytidylyltransferase (222 aa).

It belongs to the IspD/TarI cytidylyltransferase family. IspD subfamily.

The enzyme catalyses 2-C-methyl-D-erythritol 4-phosphate + CTP + H(+) = 4-CDP-2-C-methyl-D-erythritol + diphosphate. It participates in isoprenoid biosynthesis; isopentenyl diphosphate biosynthesis via DXP pathway; isopentenyl diphosphate from 1-deoxy-D-xylulose 5-phosphate: step 2/6. Functionally, catalyzes the formation of 4-diphosphocytidyl-2-C-methyl-D-erythritol from CTP and 2-C-methyl-D-erythritol 4-phosphate (MEP). The chain is 2-C-methyl-D-erythritol 4-phosphate cytidylyltransferase from Thermotoga maritima (strain ATCC 43589 / DSM 3109 / JCM 10099 / NBRC 100826 / MSB8).